Consider the following 222-residue polypeptide: PKHD-type hydroxylase PCC8801_2196 (222 aa).

The 98-residue stretch at 78-175 (RIHSLLFSRY…RLVVVGWIES (98 aa)) folds into the Fe2OG dioxygenase domain. 3 residues coordinate Fe cation: histidine 96, aspartate 98, and histidine 156. Arginine 166 is a 2-oxoglutarate binding site.

Requires Fe(2+) as cofactor. L-ascorbate serves as cofactor.

The protein is PKHD-type hydroxylase PCC8801_2196 of Rippkaea orientalis (strain PCC 8801 / RF-1) (Cyanothece sp. (strain PCC 8801)).